The sequence spans 280 residues: Chaperone protein DnaJ 2 (280 aa).

One can recognise a J domain in the interval 6–70; sequence DYYAILGVPR…EKRRIYDTYG (65 aa).

This sequence belongs to the DnaJ family. Forms a heterononamer with DnaJ and DafA in the resting state. Three copies of each protein are present in the complex.

Its subcellular location is the cytoplasm. Its function is as follows. Does not influence ATP binding or hydrolysis nor ADP release. Exerts influence on the interaction of DnaK with substrates; in the presence of DafA, DnaJ inhibits substrate binding, and substrate already bound to DnaK is displaced by DnaJ and DafA. In Thermus thermophilus (strain ATCC 27634 / DSM 579 / HB8), this protein is Chaperone protein DnaJ 2 (dnaJ2).